A 354-amino-acid polypeptide reads, in one-letter code: Protein-arginine kinase (354 aa).

A Phosphagen kinase C-terminal domain is found at 24 to 254 (IVLSSRIRLA…QQIIQQEKMA (231 aa)). Residues 27 to 31 (SSRIR), histidine 92, arginine 125, 176 to 180 (RASVM), and 207 to 212 (RGIYGE) contribute to the ATP site. The RDXXRA motif of the pArg binding pocket involved in allosteric regulation motif lies at 337–342 (RDYRRA).

This sequence belongs to the ATP:guanido phosphotransferase family.

It catalyses the reaction L-arginyl-[protein] + ATP = N(omega)-phospho-L-arginyl-[protein] + ADP + H(+). Appears to be allosterically activated by the binding of pArg-containing polypeptides to the pArg-binding pocket localized in the C-terminal domain of McsB. Its function is as follows. Catalyzes the specific phosphorylation of arginine residues in a large number of proteins. Is part of the bacterial stress response system. Protein arginine phosphorylation has a physiologically important role and is involved in the regulation of many critical cellular processes, such as protein homeostasis, motility, competence, and stringent and stress responses, by regulating gene expression and protein activity. This Bacillus thuringiensis subsp. konkukian (strain 97-27) protein is Protein-arginine kinase.